The sequence spans 227 residues: Cytochrome c oxidase subunit 2 (227 aa).

The Mitochondrial intermembrane portion of the chain corresponds to 1 to 14; it reads MAYPFQLGLQDATS. Residues 15–45 traverse the membrane as a helical segment; it reads PIMEELLHFHDHALMIVFLISSLVLYIISLM. The Mitochondrial matrix portion of the chain corresponds to 46-59; the sequence is LTTKLTHTSTMDAQ. A helical membrane pass occupies residues 60–87; that stretch reads EVETVWTILPAIILILIALPSLRILYMM. Over 88-227 the chain is Mitochondrial intermembrane; the sequence is DEINNPSLTV…YFETWSALMV (140 aa). Positions 161, 196, 198, 200, 204, and 207 each coordinate Cu cation. Mg(2+) is bound at residue glutamate 198. Tyrosine 218 is subject to Phosphotyrosine.

This sequence belongs to the cytochrome c oxidase subunit 2 family. Component of the cytochrome c oxidase (complex IV, CIV), a multisubunit enzyme composed of 14 subunits. The complex is composed of a catalytic core of 3 subunits MT-CO1, MT-CO2 and MT-CO3, encoded in the mitochondrial DNA, and 11 supernumerary subunits COX4I, COX5A, COX5B, COX6A, COX6B, COX6C, COX7A, COX7B, COX7C, COX8 and NDUFA4, which are encoded in the nuclear genome. The complex exists as a monomer or a dimer and forms supercomplexes (SCs) in the inner mitochondrial membrane with NADH-ubiquinone oxidoreductase (complex I, CI) and ubiquinol-cytochrome c oxidoreductase (cytochrome b-c1 complex, complex III, CIII), resulting in different assemblies (supercomplex SCI(1)III(2)IV(1) and megacomplex MCI(2)III(2)IV(2)). Found in a complex with TMEM177, COA6, COX18, COX20, SCO1 and SCO2. Interacts with TMEM177 in a COX20-dependent manner. Interacts with COX20. Interacts with COX16. The cofactor is Cu cation.

Its subcellular location is the mitochondrion inner membrane. The catalysed reaction is 4 Fe(II)-[cytochrome c] + O2 + 8 H(+)(in) = 4 Fe(III)-[cytochrome c] + 2 H2O + 4 H(+)(out). In terms of biological role, component of the cytochrome c oxidase, the last enzyme in the mitochondrial electron transport chain which drives oxidative phosphorylation. The respiratory chain contains 3 multisubunit complexes succinate dehydrogenase (complex II, CII), ubiquinol-cytochrome c oxidoreductase (cytochrome b-c1 complex, complex III, CIII) and cytochrome c oxidase (complex IV, CIV), that cooperate to transfer electrons derived from NADH and succinate to molecular oxygen, creating an electrochemical gradient over the inner membrane that drives transmembrane transport and the ATP synthase. Cytochrome c oxidase is the component of the respiratory chain that catalyzes the reduction of oxygen to water. Electrons originating from reduced cytochrome c in the intermembrane space (IMS) are transferred via the dinuclear copper A center (CU(A)) of subunit 2 and heme A of subunit 1 to the active site in subunit 1, a binuclear center (BNC) formed by heme A3 and copper B (CU(B)). The BNC reduces molecular oxygen to 2 water molecules using 4 electrons from cytochrome c in the IMS and 4 protons from the mitochondrial matrix. The polypeptide is Cytochrome c oxidase subunit 2 (MT-CO2) (Canis aureus (Golden jackal)).